The sequence spans 574 residues: Septation ring formation regulator EzrA (574 aa).

Residues 1–7 (MSSGIIL) are Extracellular-facing. Residues 8 to 26 (LIVAIVLLVIIAYLVGVII) form a helical membrane-spanning segment. At 27–574 (RKRNDSLITS…YEKTREHIRF (548 aa)) the chain is on the cytoplasmic side. 3 coiled-coil regions span residues 102–141 (NFIR…EEKN), 274–350 (ELVT…ETES), and 459–520 (QLEA…SFEA).

The protein belongs to the EzrA family.

The protein localises to the cell membrane. Its function is as follows. Negative regulator of FtsZ ring formation; modulates the frequency and position of FtsZ ring formation. Inhibits FtsZ ring formation at polar sites. Interacts either with FtsZ or with one of its binding partners to promote depolymerization. This chain is Septation ring formation regulator EzrA, found in Streptococcus pyogenes serotype M3 (strain SSI-1).